Reading from the N-terminus, the 501-residue chain is Leukocyte receptor cluster member 9 (501 aa).

4 disordered regions span residues 1 to 43 (MGSR…PAPP), 61 to 86 (RQPHPGAPAPPGREAQPEAGAKKPPL), 203 to 234 (GQEAQAAPKRGSTRPLCTGHQEPGVEEPGELE), and 281 to 300 (QALGVPGGSAETTEAEWGPA). The C3H1-type zinc finger occupies 40-67 (PAPPPACRFFLEGRCRFGARCRQPHPGA).

The sequence is that of Leukocyte receptor cluster member 9 (LENG9) from Homo sapiens (Human).